A 329-amino-acid polypeptide reads, in one-letter code: Major outer membrane protein P.IB (329 aa).

A signal peptide spans 1 to 19 (MKKSLIALTLAALPVAAMA).

This sequence belongs to the Gram-negative porin family. Homotrimer.

The protein resides in the cell outer membrane. Functionally, serves as a slightly cation selective porin. The chain is Major outer membrane protein P.IB (porB) from Neisseria meningitidis serogroup A / serotype 4A (strain DSM 15465 / Z2491).